Reading from the N-terminus, the 318-residue chain is Taste receptor type 2 member 7 (318 aa).

The Extracellular portion of the chain corresponds to 1 to 9 (MADKVQTTL). A helical transmembrane segment spans residues 10–30 (LFLAVGEFSVGILGNAFIGLV). Residues 31–55 (NCMDWVKKRKIASIDLILTSLAISR) lie on the Cytoplasmic side of the membrane. Residues 56 to 76 (ICLLCIILLDCFTLVLYPDVY) traverse the membrane as a helical segment. The Extracellular portion of the chain corresponds to 77 to 94 (ATGKEMRIIDFFWTLTNH). A helical transmembrane segment spans residues 95–115 (LSIWFATCLSIYYFFKIGNFF). Over 116–128 (HPLFLWMKWRIDR) the chain is Cytoplasmic. A helical membrane pass occupies residues 129-149 (VISWILLGCVVLSVFISLPAT). Topologically, residues 150 to 187 (ENLNADFRFCVKAKRKTNLTWSCRVNKTQHASTKLFLN) are extracellular. N-linked (GlcNAc...) asparagine glycosylation is found at Asn167 and Asn175. The helical transmembrane segment at 188–208 (LATLLPFCVCLMSFFLLILSL) threads the bilayer. Residues 209-235 (RRHIRRMQLSATGCRDPSTEAHVRALK) are Cytoplasmic-facing. A helical membrane pass occupies residues 236-256 (AVISFLLLFIAYYLSFLIATS). At 257 to 266 (SYFMPETELA) the chain is on the extracellular side. The helical transmembrane segment at 267 to 287 (VIFGESIALIYPSSHSFILIL) threads the bilayer. Residues 288–318 (GNNKLRYVSLKVIWKVMSILKGRKFQQHKQI) lie on the Cytoplasmic side of the membrane.

This sequence belongs to the G-protein coupled receptor T2R family.

It localises to the membrane. Its function is as follows. Gustducin-coupled receptor implicated in the perception of bitter compounds in the oral cavity and the gastrointestinal tract. Signals through PLCB2 and the calcium-regulated cation channel TRPM5. The sequence is that of Taste receptor type 2 member 7 (TAS2R7) from Gorilla gorilla gorilla (Western lowland gorilla).